A 248-amino-acid polypeptide reads, in one-letter code: 2,3-bisphosphoglycerate-dependent phosphoglycerate mutase (248 aa).

Substrate-binding positions include arginine 8–asparagine 15, threonine 21–glycine 22, arginine 60, glutamate 87–tyrosine 90, lysine 98, arginine 114–arginine 115, and glycine 183–asparagine 184. Histidine 9 (tele-phosphohistidine intermediate) is an active-site residue. Glutamate 87 functions as the Proton donor/acceptor in the catalytic mechanism.

It belongs to the phosphoglycerate mutase family. BPG-dependent PGAM subfamily.

The enzyme catalyses (2R)-2-phosphoglycerate = (2R)-3-phosphoglycerate. The protein operates within carbohydrate degradation; glycolysis; pyruvate from D-glyceraldehyde 3-phosphate: step 3/5. Its function is as follows. Catalyzes the interconversion of 2-phosphoglycerate and 3-phosphoglycerate. In Brachyspira hyodysenteriae (strain ATCC 49526 / WA1), this protein is 2,3-bisphosphoglycerate-dependent phosphoglycerate mutase.